Consider the following 312-residue polypeptide: Methionyl-tRNA formyltransferase (312 aa).

112–115 contributes to the (6S)-5,6,7,8-tetrahydrofolate binding site; that stretch reads SLLP.

The protein belongs to the Fmt family.

It catalyses the reaction L-methionyl-tRNA(fMet) + (6R)-10-formyltetrahydrofolate = N-formyl-L-methionyl-tRNA(fMet) + (6S)-5,6,7,8-tetrahydrofolate + H(+). Its function is as follows. Attaches a formyl group to the free amino group of methionyl-tRNA(fMet). The formyl group appears to play a dual role in the initiator identity of N-formylmethionyl-tRNA by promoting its recognition by IF2 and preventing the misappropriation of this tRNA by the elongation apparatus. This chain is Methionyl-tRNA formyltransferase, found in Syntrophus aciditrophicus (strain SB).